Here is a 441-residue protein sequence, read N- to C-terminus: Tol-Pal system protein TolB (441 aa).

A signal peptide spans 1–39 (MPAMTPAFRRADLTGFLRTYGAALILLLAAMLAWQPAQA).

This sequence belongs to the TolB family. In terms of assembly, the Tol-Pal system is composed of five core proteins: the inner membrane proteins TolA, TolQ and TolR, the periplasmic protein TolB and the outer membrane protein Pal. They form a network linking the inner and outer membranes and the peptidoglycan layer.

It is found in the periplasm. Functionally, part of the Tol-Pal system, which plays a role in outer membrane invagination during cell division and is important for maintaining outer membrane integrity. This chain is Tol-Pal system protein TolB, found in Bordetella parapertussis (strain 12822 / ATCC BAA-587 / NCTC 13253).